We begin with the raw amino-acid sequence, 338 residues long: Protein SGT1 homolog (338 aa).

Residue alanine 2 is modified to N-acetylalanine. TPR repeat units lie at residues 11 to 45, 46 to 79, and 80 to 113; these read AASR…KPDD, APYY…NPNS, and STAL…NSAD. Residues 142–231 enclose the CS domain; sequence QSKIKYDWYQ…PEAVRWEKLE (90 aa). One can recognise an SGS domain in the interval 249 to 338; sequence LYPSSSHYTR…PPDDMEWKKY (90 aa). Serine 254 is modified (phosphoserine). Threonine 257 carries the phosphothreonine modification. Lysine 268 participates in a covalent cross-link: Glycyl lysine isopeptide (Lys-Gly) (interchain with G-Cter in SUMO1); alternate. A Glycyl lysine isopeptide (Lys-Gly) (interchain with G-Cter in SUMO2); alternate cross-link involves residue lysine 268. Serine 304 carries the post-translational modification Phosphoserine.

This sequence belongs to the SGT1 family. As to quaternary structure, probably associates with SCF (SKP1-CUL1-F-box protein) complex through interaction with SKP1. Interacts with S100A6. Interacts with HSP90. Post-translationally, phosphorylated at Ser-254 and Ser-304, dephosphorylation promotes nuclear translocation, most likely due to disruption of the SUGT1-HSP90 complex.

It is found in the cytoplasm. It localises to the nucleus. Functionally, may play a role in ubiquitination and subsequent proteasomal degradation of target proteins. The sequence is that of Protein SGT1 homolog from Bos taurus (Bovine).